The chain runs to 114 residues: MICOS complex subunit MIC12 (114 aa).

The chain crosses the membrane as a helical span at residues 4-26 (IAKLGSFTLVSGVVATSCYYYFI).

Belongs to the MICOS complex subunit Mic12 family. As to quaternary structure, component of the mitochondrial contact site and cristae organizing system (MICOS) complex.

It is found in the mitochondrion inner membrane. Component of the MICOS complex, a large protein complex of the mitochondrial inner membrane that plays crucial roles in the maintenance of crista junctions, inner membrane architecture, and formation of contact sites to the outer membrane. The chain is MICOS complex subunit MIC12 (AIM5) from Candida glabrata (strain ATCC 2001 / BCRC 20586 / JCM 3761 / NBRC 0622 / NRRL Y-65 / CBS 138) (Yeast).